A 326-amino-acid chain; its full sequence is Sulfate/thiosulfate import ATP-binding protein CysA (326 aa).

The ABC transporter domain maps to 3–237; that stretch reads IEVRNVSKNF…PSNDFVYHFL (235 aa). ATP is bound at residue 35 to 42; sequence GPSGCGKT.

Belongs to the ABC transporter superfamily. Sulfate/tungstate importer (TC 3.A.1.6) family. As to quaternary structure, the complex is composed of two ATP-binding proteins (CysA), two transmembrane proteins (CysT and CysW) and a solute-binding protein (CysP).

The protein localises to the cell inner membrane. It carries out the reaction sulfate(out) + ATP + H2O = sulfate(in) + ADP + phosphate + H(+). It catalyses the reaction thiosulfate(out) + ATP + H2O = thiosulfate(in) + ADP + phosphate + H(+). Functionally, part of the ABC transporter complex CysAWTP involved in sulfate/thiosulfate import. Responsible for energy coupling to the transport system. In Pseudomonas syringae pv. tomato (strain ATCC BAA-871 / DC3000), this protein is Sulfate/thiosulfate import ATP-binding protein CysA.